Consider the following 363-residue polypeptide: Aminomethyltransferase (363 aa).

The protein belongs to the GcvT family. In terms of assembly, the glycine cleavage system is composed of four proteins: P, T, L and H.

It carries out the reaction N(6)-[(R)-S(8)-aminomethyldihydrolipoyl]-L-lysyl-[protein] + (6S)-5,6,7,8-tetrahydrofolate = N(6)-[(R)-dihydrolipoyl]-L-lysyl-[protein] + (6R)-5,10-methylene-5,6,7,8-tetrahydrofolate + NH4(+). Functionally, the glycine cleavage system catalyzes the degradation of glycine. This is Aminomethyltransferase from Staphylococcus epidermidis (strain ATCC 35984 / DSM 28319 / BCRC 17069 / CCUG 31568 / BM 3577 / RP62A).